The primary structure comprises 668 residues: DNA ligase (668 aa).

NAD(+)-binding positions include 35 to 39 (DKEYD) and 83 to 84 (SL). Residue lysine 125 is the N6-AMP-lysine intermediate of the active site. The NAD(+) site is built by arginine 147, glutamate 181, and lysine 317. The Zn(2+) site is built by cysteine 410, cysteine 413, cysteine 426, and cysteine 432. Positions 591–668 (KKDNKFNGKT…TEEEFNEMIN (78 aa)) constitute a BRCT domain.

Belongs to the NAD-dependent DNA ligase family. LigA subfamily. The cofactor is Mg(2+). Requires Mn(2+) as cofactor.

It carries out the reaction NAD(+) + (deoxyribonucleotide)n-3'-hydroxyl + 5'-phospho-(deoxyribonucleotide)m = (deoxyribonucleotide)n+m + AMP + beta-nicotinamide D-nucleotide.. Functionally, DNA ligase that catalyzes the formation of phosphodiester linkages between 5'-phosphoryl and 3'-hydroxyl groups in double-stranded DNA using NAD as a coenzyme and as the energy source for the reaction. It is essential for DNA replication and repair of damaged DNA. This chain is DNA ligase, found in Clostridium tetani (strain Massachusetts / E88).